Reading from the N-terminus, the 475-residue chain is MKYEAVIGLEVHAELLTESKIFCGCTTKFGGEPNTHVCPVCLGLPGTLPVLNKKVVEYAVRAGLALNCTIANFSKMDRKNYFYPDLPKAYQISQYDLPLCSNGYVEIEVDGKVKKIGIKRIHIEEDAGKLLHENTDGSLVDYNRAGVPLIEIVSEPDMSTPEEAYQYLTKLKSILEYTEVSDCKMQEGSLRVDTNVSVRPVGSTELGTKIELKNLNSFRAVQKALEYEIKRQIKVLEEGGTIVQETRRWNEAKGITEPMRTKEEAHDYRYFPEPDLVPIIVTDEWKEEIRKSLPEMPHRKRERFISEYGLPEYDAKIITSSKKIADFFEKCALEYDSPKAVSNWLMGEFSRLMNETGKEIDEVPVTPQMLVKLLKLIDNGVISGSIAKTVFEEMFGTGKEPEVIVEEKGLKQIANEDELREIIKKVIAENPKSVEDYKNGKEKAMGFLVGQVMKATKGKANPQLTNQILKEELSK.

The protein belongs to the GatB/GatE family. GatB subfamily. In terms of assembly, heterotrimer of A, B and C subunits.

It carries out the reaction L-glutamyl-tRNA(Gln) + L-glutamine + ATP + H2O = L-glutaminyl-tRNA(Gln) + L-glutamate + ADP + phosphate + H(+). The catalysed reaction is L-aspartyl-tRNA(Asn) + L-glutamine + ATP + H2O = L-asparaginyl-tRNA(Asn) + L-glutamate + ADP + phosphate + 2 H(+). In terms of biological role, allows the formation of correctly charged Asn-tRNA(Asn) or Gln-tRNA(Gln) through the transamidation of misacylated Asp-tRNA(Asn) or Glu-tRNA(Gln) in organisms which lack either or both of asparaginyl-tRNA or glutaminyl-tRNA synthetases. The reaction takes place in the presence of glutamine and ATP through an activated phospho-Asp-tRNA(Asn) or phospho-Glu-tRNA(Gln). The protein is Aspartyl/glutamyl-tRNA(Asn/Gln) amidotransferase subunit B of Thermoanaerobacter sp. (strain X514).